A 494-amino-acid polypeptide reads, in one-letter code: Cobyric acid synthase (494 aa).

A GATase cobBQ-type domain is found at 252–444 (DLNIAVIRLP…LHGLFDNGPW (193 aa)). C333 acts as the Nucleophile in catalysis. H436 is an active-site residue.

The protein belongs to the CobB/CobQ family. CobQ subfamily.

It participates in cofactor biosynthesis; adenosylcobalamin biosynthesis. In terms of biological role, catalyzes amidations at positions B, D, E, and G on adenosylcobyrinic A,C-diamide. NH(2) groups are provided by glutamine, and one molecule of ATP is hydrogenolyzed for each amidation. In Nostoc punctiforme (strain ATCC 29133 / PCC 73102), this protein is Cobyric acid synthase.